A 499-amino-acid chain; its full sequence is Phenylalanine--tRNA ligase alpha subunit B (499 aa).

L-phenylalanine-binding positions include T330, 373–375 (QIE), and Y413. A Mg(2+)-binding site is contributed by E415. Residue F439 participates in L-phenylalanine binding.

This sequence belongs to the class-II aminoacyl-tRNA synthetase family. Phe-tRNA synthetase alpha subunit type 2 subfamily. Heterotetramer; dimer of two heterodimers formed by alpha and beta subunits. Requires Mg(2+) as cofactor.

It is found in the cytoplasm. The catalysed reaction is tRNA(Phe) + L-phenylalanine + ATP = L-phenylalanyl-tRNA(Phe) + AMP + diphosphate + H(+). The polypeptide is Phenylalanine--tRNA ligase alpha subunit B (farsa-b) (Xenopus laevis (African clawed frog)).